The sequence spans 536 residues: Apolipoprotein N-acyltransferase (536 aa).

6 consecutive transmembrane segments (helical) span residues 34 to 54, 64 to 84, 89 to 109, 129 to 149, 172 to 192, and 199 to 219; these read PLWW…RPGA, ALIG…WLFI, YGAL…AFLA, GAAL…GSLW, YVGV…CVQW, and HWPM…AAVQ. In terms of domain architecture, CN hydrolase spans 244-487; it reads LQGNIAQDEK…RGVLRGQVHG (244 aa). Residue Glu-283 is the Proton acceptor of the active site. Residue Lys-345 is part of the active site. Cys-395 acts as the Nucleophile in catalysis. The helical transmembrane segment at 503–523 threads the bilayer; it reads WWVARWGLWPLWALAALALAW.

This sequence belongs to the CN hydrolase family. Apolipoprotein N-acyltransferase subfamily.

It localises to the cell inner membrane. The catalysed reaction is N-terminal S-1,2-diacyl-sn-glyceryl-L-cysteinyl-[lipoprotein] + a glycerophospholipid = N-acyl-S-1,2-diacyl-sn-glyceryl-L-cysteinyl-[lipoprotein] + a 2-acyl-sn-glycero-3-phospholipid + H(+). The protein operates within protein modification; lipoprotein biosynthesis (N-acyl transfer). Its function is as follows. Catalyzes the phospholipid dependent N-acylation of the N-terminal cysteine of apolipoprotein, the last step in lipoprotein maturation. This is Apolipoprotein N-acyltransferase from Verminephrobacter eiseniae (strain EF01-2).